We begin with the raw amino-acid sequence, 1456 residues long: Sterol 3-beta-glucosyltransferase (1456 aa).

A compositionally biased stretch (acidic residues) spans 60-70 (ESDEEDGDEVE). Disordered regions lie at residues 60–113 (ESDE…SISH) and 128–156 (LSPH…TQSE). A compositionally biased stretch (low complexity) spans 71–104 (TPSTTTTAVSPSATMSAPSPTATAPTPHSGTHTP). Residues 137–146 (SSHEASRRGS) show a composition bias toward basic and acidic residues. One can recognise a GRAM 1 domain in the interval 200–247 (QKLKGFAALDVDEQLIADYPVWLLKNVLIQGHLYITAKHMCFLSYLPR). A PH domain is found at 251–351 (ANIRSGTLVK…WVKALQKEIF (101 aa)). 2 disordered regions span residues 462-512 (HSAH…PRLP) and 524-776 (DKCD…QDTF). The span at 496-508 (QPHERDEKRDSKL) shows a compositional bias: basic and acidic residues. Over residues 556 to 567 (LASQRTSSSTLF) the composition is skewed to polar residues. Composition is skewed to low complexity over residues 576-606 (SQPT…PASA) and 647-676 (GGAT…SSPG). Residues 677–696 (TPGGLGGPGAVGAGGPGVMG) show a composition bias toward gly residues. Over residues 719–735 (APHDPAAAAAAADAAAP) the composition is skewed to low complexity. The GRAM 2 domain maps to 827–893 (ERFQKRFALG…KVVENATKDS (67 aa)). The UDP-alpha-D-glucose site is built by S1004, R1005, D1007, N1279, N1307, H1310, H1323, S1326, G1327, T1328, D1347, and Q1348.

This sequence belongs to the glycosyltransferase 28 family.

It is found in the cytoplasm. It localises to the membrane. The enzyme catalyses a sterol + UDP-alpha-D-glucose = a sterol 3-beta-D-glucoside + UDP + H(+). It carries out the reaction ergosterol + UDP-alpha-D-glucose = ergosteryl 3-beta-D-glucoside + UDP + H(+). Its function is as follows. Sterol glycosyltransferase responsible for the glycosylation of ergosterol to form ergosterol-glucoside. This is Sterol 3-beta-glucosyltransferase from Yarrowia lipolytica (strain CLIB 122 / E 150) (Yeast).